The primary structure comprises 919 residues: WD repeat-containing protein 47 (919 aa).

The 33-residue stretch at 10–42 (KEVEIIKLILDFLNSKKLHISMLALEKESGVIN) folds into the LisH domain. In terms of domain architecture, CTLH spans 45-102 (FSDDMLFLRQLILDGQWDEVLQFIQPLECMEKFDKKRFRYIILKQKFLEALCVNNAMS). At Thr-285 the chain carries Phosphothreonine. Ser-289, Ser-292, Ser-297, and Ser-312 each carry phosphoserine. Residues 393–421 (GQSSVSEKEPANGAQNPGPAKQEKNELRD) are disordered. Ser-422 carries the phosphoserine modification. The tract at residues 500 to 590 (LNQQCNGSKG…SLSRSKGEED (91 aa)) is disordered. Residues 517-551 (VTSFTTPPQDSSQRLTHDASNIHTSTPRNPGSTNH) are compositionally biased toward polar residues. Thr-542 carries the post-translational modification Phosphothreonine. WD repeat units lie at residues 604–643 (EDTQAVRAVAFHPAGGLYAVGSNSKTLRVCAYPDVIDPSA), 659–698 (HHKGSIYCVAWSPCGQLLATGSNDKYVKVLPFNAETCNAT), 706–748 (MHDG…GQGL), 753–791 (GHTGHILALYTWSGWMIASGSQDKTVRFWDLRVPSCVRV), 798–837 (GTGSAVASVAVDPSGRLLATGQEDSSCMLYDIRGGRMVQS), 840–879 (PHSSDVRSVRFSPGAHYLLTGSYDMKIKVTDLQGDLTKQL), and 886–918 (EHKDKVIQCRWHTQDLSFLSSSADRTVTLWTYN).

As to quaternary structure, interacts with MAP1S (via WD repeats).

It localises to the cytoplasm. Its subcellular location is the cytoskeleton. This chain is WD repeat-containing protein 47 (WDR47), found in Homo sapiens (Human).